The following is a 1054-amino-acid chain: Bifunctional cytochrome P450/NADPH--P450 reductase 2 (1054 aa).

The interval 1-475 is cytochrome P450; it reads MKQASAIPQP…QADIKAETKP (475 aa). Cysteine 403 provides a ligand contact to heme. Basic and acidic residues predominate over residues 462 to 480; the sequence is QRKEQADIKAETKPKETKP. The segment at 462 to 482 is disordered; the sequence is QRKEQADIKAETKPKETKPKH. The segment at 476 to 1053 is NADPH--P450 reductase; it reads KETKPKHGTP…RRYVKDVWTG (578 aa). Residues 486–625 form the Flavodoxin-like domain; that stretch reads LLVLFGSNLG…HRESWENRFW (140 aa). FMN-binding positions include 492-497, 539-542, 573-575, and 581-583; these read SNLGTA, SYNG, CGN, and TYQ. An FAD-binding FR-type domain is found at 663-896; that stretch reads YGAFEGIVLE…RTPQSGFQMP (234 aa).

In the N-terminal section; belongs to the cytochrome P450 family. Requires FAD as cofactor. FMN is required as a cofactor. Heme b serves as cofactor.

The protein localises to the cytoplasm. It carries out the reaction an organic molecule + reduced [NADPH--hemoprotein reductase] + O2 = an alcohol + oxidized [NADPH--hemoprotein reductase] + H2O + H(+). The enzyme catalyses 2 oxidized [cytochrome P450] + NADPH = 2 reduced [cytochrome P450] + NADP(+) + H(+). Functions as a fatty acid monooxygenase. Catalyzes hydroxylation of a range of medium to long-chain fatty acids, with a preference for long-chain unsaturated and branched-chain fatty acids over saturated fatty acids. Hydroxylation of myristic acid occurs mainly at the omega-2 and omega-3 positions, in approximately equal proportions. Also displays a NADPH-dependent reductase activity in the C-terminal domain, which allows electron transfer from NADPH to the heme iron of the cytochrome P450 N-terminal domain. This is Bifunctional cytochrome P450/NADPH--P450 reductase 2 from Bacillus subtilis (strain 168).